Consider the following 317-residue polypeptide: Aspartate carbamoyltransferase catalytic subunit (317 aa).

Arginine 66 and threonine 67 together coordinate carbamoyl phosphate. Lysine 94 serves as a coordination point for L-aspartate. Residues arginine 116, histidine 144, and glutamine 147 each contribute to the carbamoyl phosphate site. L-aspartate contacts are provided by arginine 177 and arginine 231. Positions 272 and 273 each coordinate carbamoyl phosphate.

This sequence belongs to the aspartate/ornithine carbamoyltransferase superfamily. ATCase family. In terms of assembly, heterododecamer (2C3:3R2) of six catalytic PyrB chains organized as two trimers (C3), and six regulatory PyrI chains organized as three dimers (R2).

It carries out the reaction carbamoyl phosphate + L-aspartate = N-carbamoyl-L-aspartate + phosphate + H(+). The protein operates within pyrimidine metabolism; UMP biosynthesis via de novo pathway; (S)-dihydroorotate from bicarbonate: step 2/3. In terms of biological role, catalyzes the condensation of carbamoyl phosphate and aspartate to form carbamoyl aspartate and inorganic phosphate, the committed step in the de novo pyrimidine nucleotide biosynthesis pathway. The chain is Aspartate carbamoyltransferase catalytic subunit from Bradyrhizobium sp. (strain BTAi1 / ATCC BAA-1182).